Consider the following 361-residue polypeptide: Peptide chain release factor 1 (361 aa).

An N5-methylglutamine modification is found at Q237.

This sequence belongs to the prokaryotic/mitochondrial release factor family. Methylated by PrmC. Methylation increases the termination efficiency of RF1.

Its subcellular location is the cytoplasm. Its function is as follows. Peptide chain release factor 1 directs the termination of translation in response to the peptide chain termination codons UAG and UAA. In Thioalkalivibrio sulfidiphilus (strain HL-EbGR7), this protein is Peptide chain release factor 1.